We begin with the raw amino-acid sequence, 1225 residues long: RNA-directed RNA polymerase VP2 (1225 aa).

The RdRp catalytic domain maps to 497 to 727 (LFLSFMPYTI…NSIVLLQQLV (231 aa)).

This sequence belongs to the reoviridae RNA-directed RNA polymerase family. In terms of assembly, interacts with VP6.

It carries out the reaction RNA(n) + a ribonucleoside 5'-triphosphate = RNA(n+1) + diphosphate. Its function is as follows. RNA-directed RNA polymerase that is involved in transcription and genome replication. Following infection, it catalyzes the synthesis of fully conservative plus strands. After core assembly, which consists in recruitment of one capped plus-strand for each genomic segments and polymerase complexes, the polymerase switches mode and catalyzes the synthesis of complementary minus-strands. The protein is RNA-directed RNA polymerase VP2 (S2) of Lymantria dispar (Gypsy moth).